A 355-amino-acid chain; its full sequence is Neutral protease 2 homolog MEP6 (355 aa).

The first 19 residues, 1–19 (MRLSSSLIALVALAGQALA), serve as a signal peptide directing secretion. Residues 20 to 179 (LPFNELAERD…ASAIPELNKR (160 aa)) constitute a propeptide that is removed on maturation. Disulfide bonds link Cys-187/Cys-259 and Cys-266/Cys-283. His-307 serves as a coordination point for Zn(2+). The active site involves Glu-308. Zn(2+) contacts are provided by His-311 and Asp-322.

This sequence belongs to the peptidase M35 family. It depends on Zn(2+) as a cofactor.

It localises to the secreted. The enzyme catalyses Preferential cleavage of bonds with hydrophobic residues in P1'. Also 3-Asn-|-Gln-4 and 8-Gly-|-Ser-9 bonds in insulin B chain.. In terms of biological role, secreted metalloproteinase that allows assimilation of proteinaceous substrates. Shows high activities on basic nuclear substrates such as histone and protamine. May be involved in virulence. In Coccidioides posadasii (strain C735) (Valley fever fungus), this protein is Neutral protease 2 homolog MEP6 (MEP6).